The sequence spans 155 residues: Small ribosomal subunit protein uS7c (155 aa).

The protein belongs to the universal ribosomal protein uS7 family. Part of the 30S ribosomal subunit.

Its subcellular location is the plastid. It is found in the chloroplast. In terms of biological role, one of the primary rRNA binding proteins, it binds directly to 16S rRNA where it nucleates assembly of the head domain of the 30S subunit. In Gunnera chilensis (Chilean rhubarb), this protein is Small ribosomal subunit protein uS7c (rps7).